The following is a 258-amino-acid chain: UPF0246 protein ABO_1338 (258 aa).

Belongs to the UPF0246 family.

This chain is UPF0246 protein ABO_1338, found in Alcanivorax borkumensis (strain ATCC 700651 / DSM 11573 / NCIMB 13689 / SK2).